Reading from the N-terminus, the 186-residue chain is Intraflagellar transport protein 27 homolog (186 aa).

GTP is bound by residues 12 to 19 (GDPTVGKT), 64 to 68 (DSAGK), and 123 to 126 (NKTD).

This sequence belongs to the small GTPase superfamily. Rab family. As to quaternary structure, component of the IFT complex B, at least composed of IFT20, IFT22, IFT25, IFT27, IFT46, IFT52, TRAF3IP1/IFT54, IFT57, IFT74, IFT80, IFT81, and IFT88. Interacts with IFT25. Interacts with IFT70B. Interacts with RABL2/RABL2A; binding is equal in the presence of GTP or GDP. Interacts with IFT88. Interacts with ARL6; recognizes and binds with the GTP-free form of ARL6.

It is found in the cell projection. It localises to the cilium. Its subcellular location is the cytoplasm. The protein localises to the flagellum. Functionally, small GTPase-like component of the intraflagellar transport (IFT) complex B that promotes the exit of the BBSome complex from cilia via its interaction with ARL6. Not involved in entry of the BBSome complex into cilium. Prevents aggregation of GTP-free ARL6. Required for hedgehog signaling. Forms a subcomplex within the IFT complex B with IFT25. Its role in intraflagellar transport is mainly seen in tissues rich in ciliated cells such as kidney and testis. Essential for male fertility, spermiogenesis and sperm flagella formation. Plays a role in the early development of the kidney. May be involved in the regulation of ureteric bud initiation. The polypeptide is Intraflagellar transport protein 27 homolog (IFT27) (Bos taurus (Bovine)).